We begin with the raw amino-acid sequence, 397 residues long: 1-deoxy-D-xylulose 5-phosphate reductoisomerase (397 aa).

Residues Thr-17, Gly-18, Ser-19, Ile-20, Asn-47, and Asn-130 each contribute to the NADPH site. Lys-131 provides a ligand contact to 1-deoxy-D-xylulose 5-phosphate. Position 132 (Glu-132) interacts with NADPH. Asp-156 is a binding site for Mn(2+). 1-deoxy-D-xylulose 5-phosphate contacts are provided by Ser-157, Glu-158, Ser-182, and His-205. Position 158 (Glu-158) interacts with Mn(2+). Gly-211 is an NADPH binding site. 1-deoxy-D-xylulose 5-phosphate-binding residues include Ser-218, Asn-223, Lys-224, and Glu-227. Glu-227 serves as a coordination point for Mn(2+).

Belongs to the DXR family. Mg(2+) is required as a cofactor. It depends on Mn(2+) as a cofactor.

It carries out the reaction 2-C-methyl-D-erythritol 4-phosphate + NADP(+) = 1-deoxy-D-xylulose 5-phosphate + NADPH + H(+). It participates in isoprenoid biosynthesis; isopentenyl diphosphate biosynthesis via DXP pathway; isopentenyl diphosphate from 1-deoxy-D-xylulose 5-phosphate: step 1/6. Catalyzes the NADPH-dependent rearrangement and reduction of 1-deoxy-D-xylulose-5-phosphate (DXP) to 2-C-methyl-D-erythritol 4-phosphate (MEP). The sequence is that of 1-deoxy-D-xylulose 5-phosphate reductoisomerase from Allorhizobium ampelinum (strain ATCC BAA-846 / DSM 112012 / S4) (Agrobacterium vitis (strain S4)).